We begin with the raw amino-acid sequence, 252 residues long: Probable truncated L-gulonolactone oxidase 7, mitochondrial (252 aa).

The transit peptide at 1–102 (MKRSMRSHLA…ELNYGVLVRY (102 aa)) directs the protein to the mitochondrion.

Belongs to the oxygen-dependent FAD-linked oxidoreductase family.

It localises to the mitochondrion. It catalyses the reaction L-gulono-1,4-lactone + O2 = L-ascorbate + H2O2 + H(+). The protein operates within cofactor biosynthesis; L-ascorbate biosynthesis. In terms of biological role, may be involved in the biosynthesis of ascorbic acid. The sequence is that of Probable truncated L-gulonolactone oxidase 7, mitochondrial from Arabidopsis thaliana (Mouse-ear cress).